The following is a 314-amino-acid chain: DNA topoisomerase I (314 aa).

The region spanning 77–314 (IQNRNAKRDR…VDHVKSSTDG (238 aa)) is the Topo IB-type catalytic domain. Catalysis depends on Tyr-274, which acts as the O-(3'-phospho-DNA)-tyrosine intermediate.

The protein belongs to the type IB topoisomerase family.

Its subcellular location is the virion. The catalysed reaction is ATP-independent breakage of single-stranded DNA, followed by passage and rejoining.. In terms of biological role, releases the supercoiling and torsional tension of DNA introduced during the DNA replication and transcription by transiently cleaving and rejoining one strand of the DNA duplex. Introduces a single-strand break via transesterification at the specific target site 5'-[CT]CCTTp site in duplex DNA. The scissile phosphodiester is attacked by the catalytic tyrosine of the enzyme, resulting in the formation of a DNA-(3'-phosphotyrosyl)-enzyme intermediate and the expulsion of a 5'-OH DNA strand. The free DNA strand then undergoes passage around the unbroken strand thus removing DNA supercoils. Finally, in the religation step, the DNA 5'-OH attacks the covalent intermediate to expel the active-site tyrosine and restore the DNA phosphodiester backbone. This Cynomys gunnisoni (Gunnison's prairie dog) protein is DNA topoisomerase I (OPG111).